The primary structure comprises 349 residues: Anthranilate phosphoribosyltransferase (349 aa).

5-phospho-alpha-D-ribose 1-diphosphate contacts are provided by residues Gly82, 85 to 86 (GD), 92 to 95 (NVST), 110 to 118 (KHGNRGVSS), and Ser122. Gly82 serves as a coordination point for anthranilate. Ser94 contributes to the Mg(2+) binding site. Asn113 is an anthranilate binding site. Anthranilate is bound at residue Arg168. Residues Asp227 and Glu228 each coordinate Mg(2+).

It belongs to the anthranilate phosphoribosyltransferase family. In terms of assembly, homodimer. Mg(2+) serves as cofactor.

It catalyses the reaction N-(5-phospho-beta-D-ribosyl)anthranilate + diphosphate = 5-phospho-alpha-D-ribose 1-diphosphate + anthranilate. It functions in the pathway amino-acid biosynthesis; L-tryptophan biosynthesis; L-tryptophan from chorismate: step 2/5. Its function is as follows. Catalyzes the transfer of the phosphoribosyl group of 5-phosphorylribose-1-pyrophosphate (PRPP) to anthranilate to yield N-(5'-phosphoribosyl)-anthranilate (PRA). The sequence is that of Anthranilate phosphoribosyltransferase from Acinetobacter baumannii (strain ATCC 17978 / DSM 105126 / CIP 53.77 / LMG 1025 / NCDC KC755 / 5377).